The primary structure comprises 483 residues: 6-phosphogluconate dehydrogenase, decarboxylating (483 aa).

NADP(+) contacts are provided by residues 10–15 and 33–35; these read GLAVMG and NRT. At Lys-38 the chain carries N6-acetyllysine. Phosphoserine is present on Ser-57. An N6-acetyllysine modification is found at Lys-59. NADP(+) is bound by residues 75-77 and Asn-103; that span reads VKA. Substrate is bound by residues Asn-103 and 129–131; that span reads SGG. Residue Ser-129 is modified to Phosphoserine. Catalysis depends on Lys-184, which acts as the Proton acceptor. 187–188 is a binding site for substrate; it reads HN. Glu-191 acts as the Proton donor in catalysis. The substrate site is built by Tyr-192, Lys-261, and Arg-288. Lys-309 carries the N6-acetyllysine modification. Substrate contacts are provided by Arg-447 and His-453. An NADP(+)-binding site is contributed by 478 to 481; that stretch reads SSSY.

This sequence belongs to the 6-phosphogluconate dehydrogenase family. Homodimer.

It is found in the cytoplasm. It carries out the reaction 6-phospho-D-gluconate + NADP(+) = D-ribulose 5-phosphate + CO2 + NADPH. Its pathway is carbohydrate degradation; pentose phosphate pathway; D-ribulose 5-phosphate from D-glucose 6-phosphate (oxidative stage): step 3/3. In terms of biological role, catalyzes the oxidative decarboxylation of 6-phosphogluconate to ribulose 5-phosphate and CO(2), with concomitant reduction of NADP to NADPH. The sequence is that of 6-phosphogluconate dehydrogenase, decarboxylating (PGD) from Homo sapiens (Human).